Reading from the N-terminus, the 453-residue chain is Protein FAM222A (453 aa).

This sequence belongs to the FAM222 family.

The sequence is that of Protein FAM222A (Fam222a) from Mus musculus (Mouse).